The primary structure comprises 425 residues: Alpha-muurolene synthase (425 aa).

Residues D97, D101, N240, S244, and E248 each contribute to the Mg(2+) site. The DDXXD motif motif lies at 97-101 (DNISD). Residues 348–382 (VAPPPPPPPPTPPPQSSDADTKKQKVKAQDGKGPV) are disordered. The segment covering 349–362 (APPPPPPPPTPPPQ) has biased composition (pro residues). Residues 366-377 (ADTKKQKVKAQD) are compositionally biased toward basic and acidic residues.

The protein belongs to the terpene synthase family. Mg(2+) serves as cofactor.

The catalysed reaction is (2E,6E)-farnesyl diphosphate = alpha-muurolene + diphosphate. It carries out the reaction (2E,6E)-farnesyl diphosphate = gamma-muurolene + diphosphate. The enzyme catalyses (2E,6E)-farnesyl diphosphate = (+)-(R)-germacrene A + diphosphate. In terms of biological role, sesquiterpene synthase that catalyzes the formation of alpha-muurolene, and at lower level (+)-(R)-germacrene A and gamma-muurolene. In Coprinopsis cinerea (strain Okayama-7 / 130 / ATCC MYA-4618 / FGSC 9003) (Inky cap fungus), this protein is Alpha-muurolene synthase (COP3).